Consider the following 396-residue polypeptide: Cytochrome c biogenesis protein Ccs1 (396 aa).

Helical transmembrane passes span 22–42, 79–99, and 162–182; these read LKFS…GTII, SNFY…CSLK, and AGPL…AIHA.

Belongs to the Ccs1/CcsB family. As to quaternary structure, may interact with CcsA.

The protein resides in the plastid. Its subcellular location is the chloroplast thylakoid membrane. In terms of biological role, required during biogenesis of c-type cytochromes (cytochrome c6 and cytochrome f) at the step of heme attachment. This Cyanidium caldarium (Red alga) protein is Cytochrome c biogenesis protein Ccs1.